The following is a 259-amino-acid chain: Short-chain dehydrogenase reductase 5 (259 aa).

Ile12–Val36 lines the NAD(+) pocket. Substrate is bound at residue Ser144. Tyr157 (proton acceptor) is an active-site residue.

Belongs to the short-chain dehydrogenases/reductases (SDR) family.

The polypeptide is Short-chain dehydrogenase reductase 5 (SDR5) (Arabidopsis thaliana (Mouse-ear cress)).